Consider the following 124-residue polypeptide: UPF0337 protein blr1496 (124 aa).

Belongs to the UPF0337 (CsbD) family.

The chain is UPF0337 protein blr1496 from Bradyrhizobium diazoefficiens (strain JCM 10833 / BCRC 13528 / IAM 13628 / NBRC 14792 / USDA 110).